Reading from the N-terminus, the 388-residue chain is Succinate--CoA ligase [ADP-forming] subunit beta (388 aa).

Residues lysine 9–histidine 244 form the ATP-grasp domain. Residues lysine 46, glycine 53 to glycine 55, glutamate 99, serine 102, and glutamate 107 each bind ATP. Asparagine 199 and aspartate 213 together coordinate Mg(2+). Substrate contacts are provided by residues asparagine 264 and glycine 321–valine 323.

This sequence belongs to the succinate/malate CoA ligase beta subunit family. Heterotetramer of two alpha and two beta subunits. Requires Mg(2+) as cofactor.

It catalyses the reaction succinate + ATP + CoA = succinyl-CoA + ADP + phosphate. The catalysed reaction is GTP + succinate + CoA = succinyl-CoA + GDP + phosphate. Its pathway is carbohydrate metabolism; tricarboxylic acid cycle; succinate from succinyl-CoA (ligase route): step 1/1. In terms of biological role, succinyl-CoA synthetase functions in the citric acid cycle (TCA), coupling the hydrolysis of succinyl-CoA to the synthesis of either ATP or GTP and thus represents the only step of substrate-level phosphorylation in the TCA. The beta subunit provides nucleotide specificity of the enzyme and binds the substrate succinate, while the binding sites for coenzyme A and phosphate are found in the alpha subunit. This Vibrio campbellii (strain ATCC BAA-1116) protein is Succinate--CoA ligase [ADP-forming] subunit beta.